The primary structure comprises 1026 residues: MMCFFFFSLQPCLFKLPLPLPLKKNTAMLSFWNPYLRGFKAPTPATKSKPKASTIYHRLIPKCFKKDERENGGIFAIETAIPPTAFYLDSELLVLPENKSSLWANETLGNCHSIQELMFHVYDIVEVVYAADRCDSIPPHLQADIVPSGIVLKLYGRTETNQSVCVNVFGQKVYFYVYNDSYSNLQRDVQHILQETGHRSTGLHLCSTQKKFLSGYSTSSHEVYQITLGSSSAMRSLASGLEQIGYRVFEANVDASTRFIVDNKFSTFGWYTCTSPLARPRVHQDAHTHLEYDCSVGDIQYHAERLDWPQYNILSFDIECLGESGFPSADKDEDMIIQISCVIWTVGGDKKQECILLSVGTCDLIENVKVYEFPSEMDLLYGFFTLLRDYGIEMITGYNICNFDFPYILNRAQNVYNIKPEDFSKTKTNSLFYVYTPQEGNFMRSHSKVKMSGVVVIDMYQVCRDKLNLSNYKLNTVAKECLGEKKNDVSYKDIPILFKGSSKDRAKLGMYCVQDAVLVIDLLKHFMTHIEITEIAKIANIPTRRVLSDGQQIRVFTCLLAAAQERDYILPMPVTGSQEGYQGATVINPISGFYNTPVLVVDFASLYPSIIQAHNLCYSTLIKQQDLPKFTNLTANDYETFMISGGPVHFVKKHKTESLLASLLKTWLAKRKSIKKELEQCQDAKMKTILDKQQLAIKVTCNSVYGFTGVASGMLPCLMIAETVTLQGRTMLEKTKQFVENVTVEYLQKICNFEVQCLPQHPNPKFRVVYGDTDSLFIKCEGFAMDTVIKFGDALASHTSSVLFASPIKLESEKVFKCLMLLTKKRYVGILSNNKILMKGVDLVRKTACVYVQEVTRAVLELLLRDEEVKVAAQTLSYSPVANCFKTEPLLGFLKIIDILNQSYSDLKSNKVPVANLTYSTELSKPFTEYKTTNLPHLAVYKKLAMRNEELPQIHDRISYVFVKSNGHLVSDMAEDPTYAEQNKIPIASDWYFDKIIHGVANILQCVFNNNTSATVEVLYNFVRNP.

Positions 664–695 (LKTWLAKRKSIKKELEQCQDAKMKTILDKQQL) form a coiled coil.

It belongs to the DNA polymerase type-B family.

Its subcellular location is the host nucleus. It catalyses the reaction DNA(n) + a 2'-deoxyribonucleoside 5'-triphosphate = DNA(n+1) + diphosphate. In terms of biological role, replicates viral genomic DNA. The sequence is that of DNA polymerase catalytic subunit (9) from Alcelaphine herpesvirus 1 (strain C500) (AlHV-1).